A 268-amino-acid chain; its full sequence is Interleukin-2 receptor subunit alpha (268 aa).

The N-terminal stretch at 1 to 21 is a signal peptide; sequence MEPRLLMLGFLSLTIVPSCRA. The Sushi 1 domain occupies 22-79; that stretch reads ELCLYDPPEVPNATFKALSYKNGTILNCECKRGFRRLKELVYMRCLGNSWSSNCQCTS. Over 22–236 the chain is Extracellular; that stretch reads ELCLYDPPEV…ETFVLTMEYK (215 aa). 3 disulfides stabilise this stretch: C24–C66, C49–C75, and C51–C77. N-linked (GlcNAc...) asparagine glycans are attached at residues N33 and N43. The disordered stretch occupies residues 86 to 109; that stretch reads RKQVTAQLEHQKEQQTTTDMQKPT. Polar residues predominate over residues 88 to 109; the sequence is QVTAQLEHQKEQQTTTDMQKPT. N-linked (GlcNAc...) asparagine glycosylation is present at N116. One can recognise a Sushi 2 domain in the interval 119 to 182; the sequence is GHCREPPPWK…WTQPQLTCVD (64 aa). Intrachain disulfides connect C121/C164 and C148/C180. The segment at 189–219 is disordered; sequence FLASEESQGSRNSSPESETSCPITTTDFPQP. Polar residues predominate over residues 193-211; it reads EESQGSRNSSPESETSCPI. Residues 237–257 form a helical membrane-spanning segment; that stretch reads VAVASCLFLLISILLLSGLTW. Residues 258 to 268 are Cytoplasmic-facing; that stretch reads QHRWRKSRRTI.

In terms of assembly, non-covalent dimer of an alpha and a beta subunit. IL2R exists in 3 different forms: a high affinity dimer, an intermediate affinity monomer (beta subunit), and a low affinity monomer (alpha subunit). The high and intermediate affinity forms also associate with a gamma subunit.

It is found in the membrane. Its function is as follows. Receptor for interleukin-2. The receptor is involved in the regulation of immune tolerance by controlling regulatory T cells (TREGs) activity. TREGs suppress the activation and expansion of autoreactive T-cells. In Mus musculus (Mouse), this protein is Interleukin-2 receptor subunit alpha (Il2ra).